Reading from the N-terminus, the 269-residue chain is Extracellular metalloprotease UREG_07765 (269 aa).

Residues 1 to 18 (MRLSVSLLALAFGSLVAA) form the signal peptide. The N-linked (GlcNAc...) asparagine glycan is linked to asparagine 179. Histidine 191 contacts Zn(2+). Residue glutamate 192 is part of the active site. Zn(2+) is bound at residue histidine 195. Residues 207-227 (VSDTPPQRSSTQGCPSSRDSC) form a disordered region. Polar residues predominate over residues 210-225 (TPPQRSSTQGCPSSRD). A disulfide bridge links cysteine 220 with cysteine 246.

It belongs to the peptidase M43B family.

The protein resides in the secreted. Its function is as follows. Secreted metalloproteinase that allows assimilation of proteinaceous substrates. This chain is Extracellular metalloprotease UREG_07765, found in Uncinocarpus reesii (strain UAMH 1704).